The chain runs to 500 residues: NAD(P)H-quinone oxidoreductase chain 4, chloroplastic (500 aa).

The next 14 helical transmembrane spans lie at 4-24 (FPWLTIIVFLPISAGSLLFFL), 31-51 (LIKWYTICICILELLLTTYAF), 87-107 (IGPILLTGFITTLATLAAWPV), 113-130 (LFHFLMLAMYSGQIGSFS), 134-154 (LLLFFIMWEFELIPVYLLLSM), 167-187 (FILYTAGGSVFLLIGVLGLGL), 208-228 (ALEIIFYIGFLIAFAVKSPII), 242-262 (HYSTCMLLAGILLKMGAYGLV), 272-292 (AHSIFSPWLIIVGTMQIIYAA), 305-325 (IAYSSVSHMGFIIIGIGSITD), 330-350 (GAILQIISHGFIGAALFFLAG), 386-406 (LALPGMSGFVAELIVFFGIIT), 416-436 (ILITFVMAIGMILTPIYSLSM), and 462-482 (LFVSISIFLPVIGIGIYPDFV).

The protein belongs to the complex I subunit 4 family.

The protein resides in the plastid. It localises to the chloroplast thylakoid membrane. The catalysed reaction is a plastoquinone + NADH + (n+1) H(+)(in) = a plastoquinol + NAD(+) + n H(+)(out). It catalyses the reaction a plastoquinone + NADPH + (n+1) H(+)(in) = a plastoquinol + NADP(+) + n H(+)(out). This Gossypium barbadense (Sea Island cotton) protein is NAD(P)H-quinone oxidoreductase chain 4, chloroplastic.